The chain runs to 389 residues: Chorismate synthase (389 aa).

R39 and R45 together coordinate NADP(+). Residues 130 to 132 (RSS), 251 to 252 (NA), G296, 311 to 315 (KPIPT), and R338 contribute to the FMN site.

The protein belongs to the chorismate synthase family. As to quaternary structure, homotetramer. The cofactor is FMNH2.

It carries out the reaction 5-O-(1-carboxyvinyl)-3-phosphoshikimate = chorismate + phosphate. It functions in the pathway metabolic intermediate biosynthesis; chorismate biosynthesis; chorismate from D-erythrose 4-phosphate and phosphoenolpyruvate: step 7/7. Functionally, catalyzes the anti-1,4-elimination of the C-3 phosphate and the C-6 proR hydrogen from 5-enolpyruvylshikimate-3-phosphate (EPSP) to yield chorismate, which is the branch point compound that serves as the starting substrate for the three terminal pathways of aromatic amino acid biosynthesis. This reaction introduces a second double bond into the aromatic ring system. This chain is Chorismate synthase, found in Oceanobacillus iheyensis (strain DSM 14371 / CIP 107618 / JCM 11309 / KCTC 3954 / HTE831).